A 275-amino-acid polypeptide reads, in one-letter code: Nurim (275 aa).

Over 1-4 the chain is Nuclear; it reads MASV. The chain crosses the membrane as a helical span at residues 5-32; that stretch reads TFRDGFLCVSALITFVFVFVTGADFVRF. Over 33–63 the chain is Perinuclear space; it reads VSFRAINHNLSGAAPLCRDSVPWSVALRDGV. The helical transmembrane segment at 64–85 threads the bilayer; it reads VQKAVAVDVLLLVVFSLQHSLL. Residues 86 to 102 are Nuclear-facing; that stretch reads AWTPVKRVCQSVFGVLS. A helical transmembrane segment spans residues 103–119; the sequence is RSVYCFTTAAALQILMH. At 120–138 the chain is on the perinuclear space side; the sequence is YWRPVTSAPCLWSVSSAPW. A helical membrane pass occupies residues 139–169; it reads EIWFPLICFIVHFLCWAIICSILLIFDYPEL. At 170-196 the chain is on the nuclear side; sequence LGIKQVYYECLGLGDPLLLKSERAQRL. The chain crosses the membrane as a helical span at residues 197–215; it reads YSHLRHPVCVELLTVLWLL. Residues 216–221 lie on the Perinuclear space side of the membrane; that stretch reads PSFPLD. The helical transmembrane segment at 222–239 threads the bilayer; that stretch reads RLLLAVFLTVYLILAHSL. Residues 240-275 are Nuclear-facing; sequence DKQDCAYLRHQLRNKLQLFSTPLEGSEQTNDNNKLE.

The protein belongs to the nurim family.

It is found in the nucleus inner membrane. This is Nurim (nrm) from Danio rerio (Zebrafish).